Here is a 448-residue protein sequence, read N- to C-terminus: UPF0210 protein Pars_1033 (448 aa).

The protein belongs to the UPF0210 family.

This Pyrobaculum arsenaticum (strain DSM 13514 / JCM 11321 / PZ6) protein is UPF0210 protein Pars_1033.